Consider the following 303-residue polypeptide: Mycothiol acetyltransferase (303 aa).

N-acetyltransferase domains lie at 10–156 (ALPG…LAVP) and 162–303 (LAVR…SGPR). Glu41 is a binding site for 1D-myo-inositol 2-(L-cysteinylamino)-2-deoxy-alpha-D-glucopyranoside. 86–88 (LLV) lines the acetyl-CoA pocket. Glu189, Lys228, and Glu235 together coordinate 1D-myo-inositol 2-(L-cysteinylamino)-2-deoxy-alpha-D-glucopyranoside. Acetyl-CoA contacts are provided by residues 239 to 241 (LGV) and 246 to 252 (SGAGLGR). Tyr272 lines the 1D-myo-inositol 2-(L-cysteinylamino)-2-deoxy-alpha-D-glucopyranoside pocket. 277–282 (NLRAVR) lines the acetyl-CoA pocket.

It belongs to the acetyltransferase family. MshD subfamily. In terms of assembly, monomer.

The catalysed reaction is 1D-myo-inositol 2-(L-cysteinylamino)-2-deoxy-alpha-D-glucopyranoside + acetyl-CoA = mycothiol + CoA + H(+). Its function is as follows. Catalyzes the transfer of acetyl from acetyl-CoA to desacetylmycothiol (Cys-GlcN-Ins) to form mycothiol. This chain is Mycothiol acetyltransferase, found in Kineococcus radiotolerans (strain ATCC BAA-149 / DSM 14245 / SRS30216).